The primary structure comprises 712 residues: Polyphosphate kinase (712 aa).

Residue Asn49 participates in ATP binding. Arg398 and Arg428 together coordinate Mg(2+). His458 (phosphohistidine intermediate) is an active-site residue. Positions 491, 587, and 615 each coordinate ATP.

It belongs to the polyphosphate kinase 1 (PPK1) family. Mg(2+) is required as a cofactor. In terms of processing, an intermediate of this reaction is the autophosphorylated ppk in which a phosphate is covalently linked to a histidine residue through a N-P bond.

The catalysed reaction is [phosphate](n) + ATP = [phosphate](n+1) + ADP. In terms of biological role, catalyzes the reversible transfer of the terminal phosphate of ATP to form a long-chain polyphosphate (polyP). The chain is Polyphosphate kinase from Prochlorococcus marinus (strain MIT 9313).